We begin with the raw amino-acid sequence, 93 residues long: Ribonuclease P protein component 1 (93 aa).

It belongs to the eukaryotic/archaeal RNase P protein component 1 family. In terms of assembly, consists of a catalytic RNA component and at least 4-5 protein subunits.

The protein localises to the cytoplasm. The enzyme catalyses Endonucleolytic cleavage of RNA, removing 5'-extranucleotides from tRNA precursor.. Functionally, part of ribonuclease P, a protein complex that generates mature tRNA molecules by cleaving their 5'-ends. The polypeptide is Ribonuclease P protein component 1 (Methanothermobacter thermautotrophicus (strain ATCC 29096 / DSM 1053 / JCM 10044 / NBRC 100330 / Delta H) (Methanobacterium thermoautotrophicum)).